The primary structure comprises 70 residues: Conotoxin Mr3.8 (70 aa).

The first 24 residues, 1-24 (MLKMGVVLFIFLVLFPLATLQLDA), serve as a signal peptide directing secretion. Residues 25-54 (DQPVERYAKNKQLFNPHKRRGIILRAPGKR) constitute a propeptide that is removed on maturation. Intrachain disulfides connect C55-C67, C56-C68, and C61-C65.

The protein belongs to the conotoxin M superfamily. In terms of tissue distribution, expressed by the venom duct.

The protein localises to the secreted. In terms of biological role, in vitro, inhibits proliferation of the mice ovarian cancer cells ID8. The sequence is that of Conotoxin Mr3.8 from Conus marmoreus (Marble cone).